The sequence spans 119 residues: Protein TusC (119 aa).

Belongs to the DsrF/TusC family. In terms of assembly, heterohexamer, formed by a dimer of trimers. The hexameric TusBCD complex contains 2 copies each of TusB, TusC and TusD. The TusBCD complex interacts with TusE.

The protein localises to the cytoplasm. Functionally, part of a sulfur-relay system required for 2-thiolation of 5-methylaminomethyl-2-thiouridine (mnm(5)s(2)U) at tRNA wobble positions. The polypeptide is Protein TusC (Citrobacter koseri (strain ATCC BAA-895 / CDC 4225-83 / SGSC4696)).